Reading from the N-terminus, the 2153-residue chain is Genome polyprotein (2153 aa).

Gly2 carries N-myristoyl glycine; by host lipidation. Topologically, residues 2–1466 are cytoplasmic; that stretch reads GAQVSRQNVG…DLNIANSIIT (1465 aa). The interval 565–582 is amphipathic alpha-helix; that stretch reads PITQNPVERYVDEVLNEV. Active-site for protease 2A activity residues include His871 and Asp888. Zn(2+) contacts are provided by Cys905 and Cys907. Cys959 serves as the catalytic For protease 2A activity. Zn(2+)-binding residues include Cys965 and His967. Positions 1091 to 1160 are membrane-binding; the sequence is SDSWLKKFTE…NLRAADTNTQ (70 aa). Residues 1091–1224 are oligomerization; sequence SDSWLKKFTE…PPGTGKSITT (134 aa). The interval 1112-1116 is RNA-binding; the sequence is GNKIS. One can recognise an SF3 helicase domain in the interval 1186-1346; sequence KRIKVLYHKC…YKDNQGKLDV (161 aa). Cys1353, Cys1364, and Cys1369 together coordinate Zn(2+). The segment at 1353–1369 adopts a C4-type; degenerate zinc-finger fold; sequence CDVDSKIGNAKCCPFVC. The segment at 1396 to 1403 is RNA-binding; it reads EDKRRRQV. The interval 1407 to 1412 is oligomerization; the sequence is MSAIFQ. An intramembrane segment occupies 1467–1482; the sequence is IIANIISIAGIIYIIY. The Cytoplasmic segment spans residues 1483–2153; it reads KLFCSLQGPY…LLRHEWYEKF (671 aa). Residue Tyr1492 is modified to O-(5'-phospho-RNA)-tyrosine. The region spanning 1511–1689 is the Peptidase C3 domain; it reads GPEEEFGMSI…FSSMLLRSYF (179 aa). Residues His1550, Glu1581, and Cys1657 each act as for protease 3C activity in the active site. The region spanning 1921–2034 is the RdRp catalytic domain; the sequence is DCIMAFDYTN…SYKYKLDMEA (114 aa). Mg(2+) is bound by residues Asp1927 and Asp2020.

Belongs to the picornaviruses polyprotein family. As to quaternary structure, interacts with capsid protein VP1 and capsid protein VP3 to form heterotrimeric protomers. Interacts with capsid protein VP0, and capsid protein VP3 to form heterotrimeric protomers. Five protomers subsequently associate to form pentamers which serve as building blocks for the capsid. Interacts with capsid protein VP2, capsid protein VP3 and capsid protein VP4 following cleavage of capsid protein VP0. In terms of assembly, interacts with capsid protein VP1 and capsid protein VP3 in the mature capsid. As to quaternary structure, interacts with capsid protein VP0 and capsid protein VP1 to form heterotrimeric protomers. Five protomers subsequently associate to form pentamers which serve as building blocks for the capsid. Interacts with capsid protein VP4 in the mature capsid. Interacts with protein 2C; this interaction may be important for virion morphogenesis. Interacts with capsid protein VP1 and capsid protein VP3. In terms of assembly, homodimer. As to quaternary structure, homohexamer; forms a hexameric ring structure with 6-fold symmetry characteristic of AAA+ ATPases. Interacts (via N-terminus) with host RTN3 (via reticulon domain); this interaction is important for viral replication. Interacts with capsid protein VP3; this interaction may be important for virion morphogenesis. Interacts with protein 3CD. In terms of assembly, homodimer. Interacts with host GBF1. Interacts (via GOLD domain) with host ACBD3 (via GOLD domain); this interaction allows the formation of a viral protein 3A/ACBD3 heterotetramer with a 2:2 stoichiometry, which will stimulate the recruitment of host PI4KB in order to synthesize PI4P at the viral RNA replication sites. As to quaternary structure, interacts with RNA-directed RNA polymerase. Interacts with protein 3AB and with RNA-directed RNA polymerase. In terms of assembly, interacts with Viral protein genome-linked and with protein 3CD. Requires Mg(2+) as cofactor. Post-translationally, specific enzymatic cleavages in vivo by the viral proteases yield processing intermediates and the mature proteins. In terms of processing, myristoylation is required for the formation of pentamers during virus assembly. Further assembly of 12 pentamers and a molecule of genomic RNA generates the provirion. During virion maturation, immature virions are rendered infectious following cleavage of VP0 into VP4 and VP2. This maturation seems to be an autocatalytic event triggered by the presence of RNA in the capsid and it is followed by a conformational change infectious virion. Post-translationally, myristoylation is required during RNA encapsidation and formation of the mature virus particle. In terms of processing, VPg is uridylylated by the polymerase into VPg-pUpU. This acts as a nucleotide-peptide primer for the genomic RNA replication.

It localises to the virion. The protein localises to the host cytoplasm. Its subcellular location is the host cytoplasmic vesicle membrane. The protein resides in the host nucleus. The catalysed reaction is a ribonucleoside 5'-triphosphate + H2O = a ribonucleoside 5'-diphosphate + phosphate + H(+). It carries out the reaction Selective cleavage of Tyr-|-Gly bond in the picornavirus polyprotein.. It catalyses the reaction RNA(n) + a ribonucleoside 5'-triphosphate = RNA(n+1) + diphosphate. The enzyme catalyses Selective cleavage of Gln-|-Gly bond in the poliovirus polyprotein. In other picornavirus reactions Glu may be substituted for Gln, and Ser or Thr for Gly.. With respect to regulation, replication or transcription is subject to high level of random mutations by the nucleotide analog ribavirin. Its function is as follows. Forms an icosahedral capsid of pseudo T=3 symmetry with capsid proteins VP2 and VP3. The capsid is 300 Angstroms in diameter, composed of 60 copies of each capsid protein and enclosing the viral positive strand RNA genome. Capsid protein VP1 mainly forms the vertices of the capsid. Capsid protein VP1 interacts with host cell receptor to provide virion attachment to target host cells. This attachment induces virion internalization. Tyrosine kinases are probably involved in the entry process. After binding to its receptor, the capsid undergoes conformational changes. Capsid protein VP1 N-terminus (that contains an amphipathic alpha-helix) and capsid protein VP4 are externalized. Together, they shape a pore in the host membrane through which viral genome is translocated to host cell cytoplasm. Functionally, forms an icosahedral capsid of pseudo T=3 symmetry with capsid proteins VP2 and VP3. The capsid is 300 Angstroms in diameter, composed of 60 copies of each capsid protein and enclosing the viral positive strand RNA genome. In terms of biological role, lies on the inner surface of the capsid shell. After binding to the host receptor, the capsid undergoes conformational changes. Capsid protein VP4 is released, Capsid protein VP1 N-terminus is externalized, and together, they shape a pore in the host membrane through which the viral genome is translocated into the host cell cytoplasm. Component of immature procapsids, which is cleaved into capsid proteins VP4 and VP2 after maturation. Allows the capsid to remain inactive before the maturation step. Its function is as follows. Cysteine protease that cleaves viral polyprotein and specific host proteins. It is responsible for the autocatalytic cleavage between the P1 and P2 regions, which is the first cleavage occurring in the polyprotein. Also cleaves the host translation initiation factor EIF4G1, in order to shut down the capped cellular mRNA translation. Inhibits the host nucleus-cytoplasm protein and RNA trafficking by cleaving host members of the nuclear pores. Counteracts stress granule formation probably by antagonizing its assembly or promoting its dissassembly. Functionally, plays an essential role in the virus replication cycle by acting as a viroporin. Creates a pore in the host endoplasmic reticulum and as a consequence releases Ca2+ in the cytoplasm of infected cell. In turn, high levels of cytoplasmic calcium may trigger membrane trafficking and transport of viral ER-associated proteins to viroplasms, sites of viral genome replication. In terms of biological role, induces and associates with structural rearrangements of intracellular membranes. Displays RNA-binding, nucleotide binding and NTPase activities. May play a role in virion morphogenesis and viral RNA encapsidation by interacting with the capsid protein VP3. Localizes the viral replication complex to the surface of membranous vesicles. It inhibits host cell endoplasmic reticulum-to-Golgi apparatus transport and causes the disassembly of the Golgi complex, possibly through GBF1 interaction. This would result in depletion of MHC, trail receptors and IFN receptors at the host cell surface. Plays an essential role in viral RNA replication by recruiting ACBD3 and PI4KB at the viral replication sites, thereby allowing the formation of the rearranged membranous structures where viral replication takes place. Its function is as follows. Acts as a primer for viral RNA replication and remains covalently bound to viral genomic RNA. VPg is uridylylated prior to priming replication into VPg-pUpU. The oriI viral genomic sequence may act as a template for this. The VPg-pUpU is then used as primer on the genomic RNA poly(A) by the RNA-dependent RNA polymerase to replicate the viral genome. During genome replication, the VPg-RNA linkage is removed by the host TDP2, thereby accelerating replication. During the late stage of the replication cycle, host TDP2 is excluded from sites of viral RNA synthesis and encapsidation, allowing for the generation of progeny virions. Functionally, involved in the viral replication complex and viral polypeptide maturation. It exhibits protease activity with a specificity and catalytic efficiency that is different from protease 3C. Protein 3CD lacks polymerase activity. Protein 3CD binds to the 5'UTR of the viral genome. In terms of biological role, major viral protease that mediates proteolytic processing of the polyprotein. Cleaves host EIF5B, contributing to host translation shutoff. Also cleaves host PABPC1, contributing to host translation shutoff. Cleaves host NLRP1, triggers host N-glycine-mediated degradation of the autoinhibitory NLRP1 N-terminal fragment. Replicates the viral genomic RNA on the surface of intracellular membranes. May form linear arrays of subunits that propagate along a strong head-to-tail interaction called interface-I. Covalently attaches UMP to a tyrosine of VPg, which is used to prime RNA synthesis. The positive stranded RNA genome is first replicated at virus induced membranous vesicles, creating a dsRNA genomic replication form. This dsRNA is then used as template to synthesize positive stranded RNA genomes. ss(+)RNA genomes are either translated, replicated or encapsidated. In Human rhinovirus 16 (HRV-16), this protein is Genome polyprotein.